Reading from the N-terminus, the 88-residue chain is Small ribosomal subunit protein bS20 (88 aa).

The disordered stretch occupies residues Met-1–Met-27.

This sequence belongs to the bacterial ribosomal protein bS20 family.

Binds directly to 16S ribosomal RNA. This Shewanella oneidensis (strain ATCC 700550 / JCM 31522 / CIP 106686 / LMG 19005 / NCIMB 14063 / MR-1) protein is Small ribosomal subunit protein bS20.